The primary structure comprises 327 residues: DNA repair and recombination protein RadA (327 aa).

An ATP-binding site is contributed by 113-120 (GEFGSGKS).

The protein belongs to the eukaryotic RecA-like protein family.

Its function is as follows. Involved in DNA repair and in homologous recombination. Binds and assemble on single-stranded DNA to form a nucleoprotein filament. Hydrolyzes ATP in a ssDNA-dependent manner and promotes DNA strand exchange between homologous DNA molecules. This chain is DNA repair and recombination protein RadA, found in Ignicoccus hospitalis (strain KIN4/I / DSM 18386 / JCM 14125).